The primary structure comprises 212 residues: Uracil phosphoribosyltransferase (212 aa).

Residues arginine 78, arginine 103, and 130-138 contribute to the 5-phospho-alpha-D-ribose 1-diphosphate site; that span reads DPMLATGGS. Residues isoleucine 193 and 198–200 each bind uracil; that span reads GDA. Position 199 (aspartate 199) interacts with 5-phospho-alpha-D-ribose 1-diphosphate.

It belongs to the UPRTase family. Requires Mg(2+) as cofactor.

The catalysed reaction is UMP + diphosphate = 5-phospho-alpha-D-ribose 1-diphosphate + uracil. It functions in the pathway pyrimidine metabolism; UMP biosynthesis via salvage pathway; UMP from uracil: step 1/1. Allosterically activated by GTP. Catalyzes the conversion of uracil and 5-phospho-alpha-D-ribose 1-diphosphate (PRPP) to UMP and diphosphate. The sequence is that of Uracil phosphoribosyltransferase from Pseudomonas putida (strain ATCC 700007 / DSM 6899 / JCM 31910 / BCRC 17059 / LMG 24140 / F1).